Here is a 113-residue protein sequence, read N- to C-terminus: uncharacterized protein (113 aa).

This sequence to H.pylori HP0245/JHP0230.

This is an uncharacterized protein from Campylobacter jejuni subsp. jejuni serotype O:2 (strain ATCC 700819 / NCTC 11168).